Consider the following 214-residue polypeptide: Somatotropin-A (214 aa).

An N-terminal signal peptide occupies residues 1 to 25 (MATGFCSSFGLLVVLLLKNVADVGA). Disulfide bonds link Cys77–Cys187 and Cys204–Cys212.

It belongs to the somatotropin/prolactin family.

The protein localises to the secreted. Its function is as follows. Growth hormone plays an important role in growth control. This Xenopus laevis (African clawed frog) protein is Somatotropin-A (gh-a).